The chain runs to 313 residues: Ribosomal RNA small subunit methyltransferase H (313 aa).

Residues 35 to 37 (GGH), D55, F81, D103, and Q110 each bind S-adenosyl-L-methionine.

The protein belongs to the methyltransferase superfamily. RsmH family.

The protein resides in the cytoplasm. It catalyses the reaction cytidine(1402) in 16S rRNA + S-adenosyl-L-methionine = N(4)-methylcytidine(1402) in 16S rRNA + S-adenosyl-L-homocysteine + H(+). Specifically methylates the N4 position of cytidine in position 1402 (C1402) of 16S rRNA. This Pseudomonas aeruginosa (strain LESB58) protein is Ribosomal RNA small subunit methyltransferase H.